Consider the following 360-residue polypeptide: Glycerol-1-phosphate dehydrogenase [NAD(P)+] (360 aa).

Residues 108–112 (GRVID) and 130–133 (TAAS) each bind NAD(+). Residue Asp-135 participates in substrate binding. Ser-139 contributes to the NAD(+) binding site. Substrate is bound at residue Asp-182. Zn(2+) contacts are provided by Asp-182 and His-262. His-266 provides a ligand contact to substrate. His-278 lines the Zn(2+) pocket.

The protein belongs to the glycerol-1-phosphate dehydrogenase family. Zn(2+) is required as a cofactor.

It is found in the cytoplasm. It catalyses the reaction sn-glycerol 1-phosphate + NAD(+) = dihydroxyacetone phosphate + NADH + H(+). The enzyme catalyses sn-glycerol 1-phosphate + NADP(+) = dihydroxyacetone phosphate + NADPH + H(+). It functions in the pathway membrane lipid metabolism; glycerophospholipid metabolism. Catalyzes the NAD(P)H-dependent reduction of dihydroxyacetonephosphate (DHAP or glycerone phosphate) to glycerol 1-phosphate (G1P). The G1P thus generated is used as the glycerophosphate backbone of phospholipids in the cellular membranes of Archaea. The protein is Glycerol-1-phosphate dehydrogenase [NAD(P)+] of Methanocorpusculum labreanum (strain ATCC 43576 / DSM 4855 / Z).